The sequence spans 112 residues: Protein GAST1 (112 aa).

The N-terminal stretch at 1–25 is a signal peptide; that stretch reads MAGKMSIVLFVLLVVFLTQNQVSRA.

The protein belongs to the GASA family. Six disulfide bonds may be present. In terms of tissue distribution, all shoot organs.

It localises to the secreted. This chain is Protein GAST1 (GAST1), found in Solanum lycopersicum (Tomato).